Consider the following 106-residue polypeptide: Large ribosomal subunit protein uL24 (106 aa).

Belongs to the universal ribosomal protein uL24 family. In terms of assembly, part of the 50S ribosomal subunit.

In terms of biological role, one of two assembly initiator proteins, it binds directly to the 5'-end of the 23S rRNA, where it nucleates assembly of the 50S subunit. One of the proteins that surrounds the polypeptide exit tunnel on the outside of the subunit. This Blochmanniella pennsylvanica (strain BPEN) protein is Large ribosomal subunit protein uL24.